The following is a 553-amino-acid chain: MQQLEQDFPGNDIDDIEDLISAEDVKPQERYQNKKSVTVRAKKRVQIKPETDAEEKPTPRPTIYESVIPGTQKVFVKTWGCAHNNSDSEYMAGQLAAYGYKLSGKDEADLWLLNSCTVKNPSEDTFRNEIESGMSNGKHIVVAGCVPQGAPKSDYLRGLSVIGVQQIDRVVEVVEETLKGHSVRLLQNKKVHGRRVAGAPLSLPKVRKNPLIEIISINTGCLNQCTYCKTKHARGDLASYPPEEIVDRARQSFAEGCCEIWLTSEDTGAYGRDIGSSLPELLWKLVEVIPEHCMLRVGMTNPPYILEHLEEVAKVLQHPRVYAFLHVPVQSGSDSVLGEMKREYCRKDFEHVVDFLRERVPGVTIATDIICGFPTETEEDFEETMTLCGRYRFPSLFINQFFPRPGTPAAKMERIPANLVKKRTKRLTDLFYSYEPYAQRVGEMYTVLVTEISHDKLHYVGHNKSYEQVLLPMRDNLLGTRVHVRITSVSKFSMVGEILDDERDWTRCAKKQEAPMELTITGRNRDKLIQRYVGIALVVGSLAFLLQLLIRFL.

Residues 21-61 (SAEDVKPQERYQNKKSVTVRAKKRVQIKPETDAEEKPTPRP) are disordered. Basic and acidic residues-rich tracts occupy residues 23–32 (EDVKPQERYQ) and 47–58 (IKPETDAEEKPT). The MTTase N-terminal domain occupies 72-179 (QKVFVKTWGC…VVEVVEETLK (108 aa)). Residues Cys81, Cys116, Cys145, Cys221, Cys225, and Cys228 each contribute to the [4Fe-4S] cluster site. One can recognise a Radical SAM core domain in the interval 207 to 438 (RKNPLIEIIS…DLFYSYEPYA (232 aa)). The TRAM domain maps to 438–500 (AQRVGEMYTV…KFSMVGEILD (63 aa)). Residues 533 to 553 (VGIALVVGSLAFLLQLLIRFL) traverse the membrane as a helical segment.

The protein belongs to the methylthiotransferase family. CDKAL1 subfamily. [4Fe-4S] cluster is required as a cofactor.

Its subcellular location is the membrane. It carries out the reaction N(6)-L-threonylcarbamoyladenosine(37) in tRNA + (sulfur carrier)-SH + AH2 + 2 S-adenosyl-L-methionine = 2-methylsulfanyl-N(6)-L-threonylcarbamoyladenosine(37) in tRNA + (sulfur carrier)-H + 5'-deoxyadenosine + L-methionine + A + S-adenosyl-L-homocysteine + 2 H(+). In terms of biological role, catalyzes the methylthiolation of N6-threonylcarbamoyladenosine (t(6)A), leading to the formation of 2-methylthio-N6-threonylcarbamoyladenosine (ms(2)t(6)A) at position 37 in tRNAs that read codons beginning with adenine. The sequence is that of Threonylcarbamoyladenosine tRNA methylthiotransferase from Drosophila pseudoobscura pseudoobscura (Fruit fly).